The sequence spans 291 residues: MAGTKEIRTKIKSVQNTRKITKAMEMVAASKMRRAQERMRSARPYAEKIRNVAAHMAQANPEYQHPFMVKRDVKRAGLIVVTTDKGLCGGLNTNVLRAVTNQLRDLQNKGVESQATAIGSKGMQFLGRIGAKVVSNVVHLGDTPHLEKLIGAIKVQLDAFTAGEIDAVYLAYTRFINTMRQEPVVEQLLPLTADKLTQTAAEKQAYSWDYIYEPDAQTVVDELLIRYVEALVYQAVAENMASEQSARMVAMKAASDNAKNVIGELQLVYNKTRQAAITKELSEIVGGAAAV.

Belongs to the ATPase gamma chain family. In terms of assembly, F-type ATPases have 2 components, CF(1) - the catalytic core - and CF(0) - the membrane proton channel. CF(1) has five subunits: alpha(3), beta(3), gamma(1), delta(1), epsilon(1). CF(0) has three main subunits: a, b and c.

It is found in the cell inner membrane. In terms of biological role, produces ATP from ADP in the presence of a proton gradient across the membrane. The gamma chain is believed to be important in regulating ATPase activity and the flow of protons through the CF(0) complex. This chain is ATP synthase gamma chain, found in Ralstonia nicotianae (strain ATCC BAA-1114 / GMI1000) (Ralstonia solanacearum).